A 223-amino-acid chain; its full sequence is ATP synthase subunit a 1 (223 aa).

5 helical membrane-spanning segments follow: residues 20–40 (QTIVMTWVIMVFLAGGSAFLT), 78–98 (YLSYLATLFLFVATAVLFTII), 107–127 (SLSTTAALALSVFVAVPLYGI), 173–193 (VMIIGILLGIAPLFFPVLMSV), and 194–214 (LGLLTGMVQAYIFSMLATVYI).

Belongs to the ATPase A chain family. F-type ATPases have 2 components, CF(1) - the catalytic core - and CF(0) - the membrane proton channel. CF(1) has five subunits: alpha(3), beta(3), gamma(1), delta(1), epsilon(1). CF(0) has four main subunits: a, b, b' and c.

Its subcellular location is the cell inner membrane. Its function is as follows. Key component of the proton channel; it plays a direct role in the translocation of protons across the membrane. The sequence is that of ATP synthase subunit a 1 from Prosthecochloris aestuarii (strain DSM 271 / SK 413).